The following is a 185-amino-acid chain: Probable RNA 2'-phosphotransferase (185 aa).

Belongs to the KptA/TPT1 family.

Removes the 2'-phosphate from RNA via an intermediate in which the phosphate is ADP-ribosylated by NAD followed by a presumed transesterification to release the RNA and generate ADP-ribose 1''-2''-cyclic phosphate (APPR&gt;P). May function as an ADP-ribosylase. The polypeptide is Probable RNA 2'-phosphotransferase (Bacillus thuringiensis subsp. konkukian (strain 97-27)).